The following is a 379-amino-acid chain: Deoxyhypusine synthase (379 aa).

Residues 108–112 (SNLIS), 134–136 (TAG), Glu-140, and Asp-257 each bind NAD(+). Residue 139–140 (EE) coordinates spermidine. Position 262 (Asp-262) interacts with spermidine. Residue Gly-304 participates in NAD(+) binding. Residue His-309 participates in spermidine binding. An NAD(+)-binding site is contributed by 329 to 330 (TG). Spermidine contacts are provided by residues 335-337 (GSD) and 344-350 (EAVSWGK). The active-site Nucleophile is the Lys-350. 363 to 364 (DA) is an NAD(+) binding site.

This sequence belongs to the deoxyhypusine synthase family. NAD(+) serves as cofactor.

It carries out the reaction [eIF5A protein]-L-lysine + spermidine = [eIF5A protein]-deoxyhypusine + propane-1,3-diamine. The protein operates within protein modification; eIF5A hypusination. In terms of biological role, catalyzes the NAD-dependent oxidative cleavage of spermidine and the subsequent transfer of the butylamine moiety of spermidine to the epsilon-amino group of a specific lysine residue of the eIF-5A precursor protein to form the intermediate deoxyhypusine residue. This Kluyveromyces lactis (strain ATCC 8585 / CBS 2359 / DSM 70799 / NBRC 1267 / NRRL Y-1140 / WM37) (Yeast) protein is Deoxyhypusine synthase (DYS1).